The primary structure comprises 771 residues: Heat shock transcription factor (771 aa).

Residues 1–70 (MTTNLYAIAG…GIGISKPGLS (70 aa)) form a disordered region. 2 stretches are compositionally biased toward low complexity: residues 11-23 (PSKP…TPSP) and 31-42 (LKSLTSLPTNPL). A compositionally biased stretch (polar residues) spans 43 to 62 (NPQGTSTSNALTNQSSSTGI). The DNA-binding element occupies 78-168 (MKVPAFLNKL…PIELWEFANP (91 aa)). A disordered region spans residues 183-266 (RKNNRLSNSG…PPSHTSAGPL (84 aa)). Composition is skewed to low complexity over residues 189 to 199 (SNSGVGSSSSL) and 212 to 233 (SASA…ISQG). Polar residues predominate over residues 238-262 (NHSTSGKYLITDGTTPGSAPPSHTS). An involved in trimerization region spans residues 280-333 (GIAAIRQTQASIATDLRKLQASNEALWRQAYETQEKQRKHEETIDLIVSFLERL). Basic and acidic residues-rich tracts occupy residues 350–372 (RGVG…ARFA) and 399–415 (TGEH…DRLV). Disordered stretches follow at residues 350 to 513 (RGVG…SSNA), 590 to 634 (QALT…GSGT), and 708 to 771 (SGVG…SGLK). Residues 418-448 (GSNSEYSIPSVKRTSSSSHPLSLGQLGSSRF) are compositionally biased toward polar residues. Low complexity-rich tracts occupy residues 497-511 (LSPL…PSSS) and 599-620 (HNPS…SASA).

This sequence belongs to the HSF family. Homotrimer. Homotrimerization increases the affinity of HSF1 to DNA. Interacts with transcriptional coregulator SSA1 on chromatin. In terms of processing, phosphorylated at high temperature.

It localises to the nucleus. DNA-binding transcription factor that specifically binds heat shock promoter elements (HSE) and activates transcription. Promotes thermotolerance by transiently regulating a subset of genes. Induces expression of STI, SSA1, SSA2, HSP78 and KAR2 during the heat response. This Cryptococcus neoformans var. grubii serotype A (strain H99 / ATCC 208821 / CBS 10515 / FGSC 9487) (Filobasidiella neoformans var. grubii) protein is Heat shock transcription factor.